The sequence spans 891 residues: von Willebrand factor A domain-containing protein 7 (891 aa).

Positions Met1–Ala28 are cleaved as a signal peptide. A glycan (N-linked (GlcNAc...) asparagine) is linked at Asn55. The interval Pro238–Pro273 is disordered. Residues Ala314–Met499 enclose the VWFA domain.

As to expression, expressed at low level in many tissues.

The protein localises to the secreted. This is von Willebrand factor A domain-containing protein 7 (Vwa7) from Mus musculus (Mouse).